A 140-amino-acid chain; its full sequence is MTERTFSIIKPDAVKRNLIGAILTRFEQNGFKIIASKMVRLTREQAEGFYAEHQGKEFFAPLVEYMMSSPIVVSVLEKENAVKDYRTLIGTTNPETAEEGTIRKDFALSQRENSVHGSDSIENANREIAYFFTDCEIFER.

ATP is bound by residues Lys10, Phe58, Arg86, Thr92, Arg103, and Asn113. The Pros-phosphohistidine intermediate role is filled by His116.

This sequence belongs to the NDK family. Homotetramer. Requires Mg(2+) as cofactor.

The protein localises to the cytoplasm. The enzyme catalyses a 2'-deoxyribonucleoside 5'-diphosphate + ATP = a 2'-deoxyribonucleoside 5'-triphosphate + ADP. It carries out the reaction a ribonucleoside 5'-diphosphate + ATP = a ribonucleoside 5'-triphosphate + ADP. Major role in the synthesis of nucleoside triphosphates other than ATP. The ATP gamma phosphate is transferred to the NDP beta phosphate via a ping-pong mechanism, using a phosphorylated active-site intermediate. This Haemophilus influenzae (strain PittEE) protein is Nucleoside diphosphate kinase.